A 700-amino-acid chain; its full sequence is pH-response regulator protein palI/prr-5 (700 aa).

Topologically, residues 1 to 8 (MLRPATPL) are cytoplasmic. The helical transmembrane segment at 9 to 29 (AVLLFAAFGLLTLATISTPII) threads the bilayer. At 30–90 (KQIPLSSFEI…PRATRSTLSS (61 aa)) the chain is on the extracellular side. A helical transmembrane segment spans residues 91 to 111 (ILIVHPVAALITLINFVLAIV). Residues 112-123 (AHFHSPSHSARY) lie on the Cytoplasmic side of the membrane. Residues 124 to 144 (LLILFIVSFVDFIVCLLCFLV) form a helical membrane-spanning segment. The Extracellular segment spans residues 145-152 (DVLLFIPH). Residues 153–173 (LSWGSYIVVAATILVAFCGLV) form a helical membrane-spanning segment. The Cytoplasmic portion of the chain corresponds to 174–700 (TCAMRRTLVN…GNMPRAAGPR (527 aa)). Disordered stretches follow at residues 226-491 (SGAN…GIRD), 507-560 (VPDP…PISE), and 573-700 (DVDP…AGPR). Positions 234-252 (KLPEFTTFEKKDDRSEERI) are enriched in basic and acidic residues. Positions 320 to 378 (GRGGMPPGGYRGRGGFPGPGRGGGPPQNGRGGYGPPGRGRGGYGPPPRGYGGPGPRGGR) are enriched in gly residues. The segment covering 414 to 424 (SPYANRQQSPG) has biased composition (polar residues). 2 stretches are compositionally biased toward polar residues: residues 593-603 (SMQSPPASNSY) and 615-637 (ESENSNFTSISQRGINPRWNSAN). Positions 657-671 (VVPRRPVNRPGAGPA) are enriched in low complexity.

This sequence belongs to the palI/RIM9 family.

Its subcellular location is the cell membrane. Its function is as follows. Required for the proteolytic cleavage of the transcription factor pacc-1 in response to alkaline ambient pH. The polypeptide is pH-response regulator protein palI/prr-5 (prr-5) (Neurospora crassa (strain ATCC 24698 / 74-OR23-1A / CBS 708.71 / DSM 1257 / FGSC 987)).